The chain runs to 610 residues: T-cell immunomodulatory protein (610 aa).

The N-terminal stretch at 1-32 is a signal peptide; that stretch reads MAAGLLPSARAVLALLFLGLALLSVGPAPAQA. N-linked (GlcNAc...) asparagine glycans are attached at residues N35, N94, N123, N138, N145, N150, N175, and N241. The stretch at 98-135 is one FG-GAP 1; atypical repeat; that stretch reads LVTSVVPGDYDGDSQMDVLLTYFPQNHSNNELGAVIFW. The FG-GAP 2; atypical repeat unit spans residues 153–183; the sequence is FHDQPLIMDFNGDLIPDVFAITNESSQPQIL. The FG-GAP 3; atypical repeat unit spans residues 256-291; sequence VVGQSAFADFDGDGHMDHLLPGCEDKDCQKSAIYLM. N-linked (GlcNAc...) asparagine glycans are attached at residues N351, N369, and N480. Residues 564 to 584 form a helical membrane-spanning segment; the sequence is IVLLTAVALTGVCVFILAIIA.

This sequence belongs to the TIP family. Interacts with RUVBL1, RUVBL2 and alpha-tubulin.

It is found in the secreted. The protein resides in the cell membrane. Its function is as follows. Modulator of T-cell function. Has a protective effect in graft versus host disease model. The protein is T-cell immunomodulatory protein of Rattus norvegicus (Rat).